The chain runs to 395 residues: Elongation factor Tu (395 aa).

A tr-type G domain is found at 10–204 (KPHLNIGTIG…AVDTWIELPE (195 aa)). Residues 19 to 26 (GHVDHGKT) are G1. 19-26 (GHVDHGKT) lines the GTP pocket. Mg(2+) is bound at residue threonine 26. The tract at residues 60–64 (GITIN) is G2. Residues 81–84 (DCPG) form a G3 region. GTP contacts are provided by residues 81-85 (DCPGH) and 136-139 (NKVD). Residues 136 to 139 (NKVD) form a G4 region. The interval 174–176 (SAL) is G5.

The protein belongs to the TRAFAC class translation factor GTPase superfamily. Classic translation factor GTPase family. EF-Tu/EF-1A subfamily. Monomer.

It localises to the cytoplasm. The enzyme catalyses GTP + H2O = GDP + phosphate + H(+). In terms of biological role, GTP hydrolase that promotes the GTP-dependent binding of aminoacyl-tRNA to the A-site of ribosomes during protein biosynthesis. In Christiangramia forsetii (strain DSM 17595 / CGMCC 1.15422 / KT0803) (Gramella forsetii), this protein is Elongation factor Tu.